We begin with the raw amino-acid sequence, 158 residues long: Transcriptional repressor NrdR (158 aa).

A zinc finger lies at 3-34 (CPFCNSEETRVIDTRLTDDGHVVRRRRECEHC). Residues 49–139 (IFVVKKGGQR…VYKEFRDLDH (91 aa)) enclose the ATP-cone domain.

This sequence belongs to the NrdR family. Zn(2+) serves as cofactor.

Its function is as follows. Negatively regulates transcription of bacterial ribonucleotide reductase nrd genes and operons by binding to NrdR-boxes. In Kosmotoga olearia (strain ATCC BAA-1733 / DSM 21960 / TBF 19.5.1), this protein is Transcriptional repressor NrdR.